The following is a 275-amino-acid chain: Protein unc-50 homolog (275 aa).

Residues 1–26 are compositionally biased toward polar residues; that stretch reads MTQYSHVKYTQSPTPSVVSGYSSASR. A disordered region spans residues 1–39; the sequence is MTQYSHVKYTQSPTPSVVSGYSSASRLHSPLPPPANHRR. The Cytoplasmic segment spans residues 1 to 99; that stretch reads MTQYSHVKYT…TKSQFARDDP (99 aa). A helical membrane pass occupies residues 100 to 120; sequence AFLVLLVVCLCVTSLGFAYVL. Residues 121 to 129 are Lumenal-facing; that stretch reads GLSFWQSIS. The helical transmembrane segment at 130 to 150 threads the bilayer; that stretch reads FIFYVVFVDCIFVGIIIASFF. The Cytoplasmic portion of the chain corresponds to 151-178; the sequence is WAVTNRYLRTNSLEPDIEWGYAFDVHLN. A helical membrane pass occupies residues 179 to 199; it reads AFFPPLMLLHFIQLFFYNWLI. The Lumenal portion of the chain corresponds to 200–207; sequence SQTWFISR. The helical transmembrane segment at 208–228 threads the bilayer; sequence FLGNTFWLMGMGYYVYITFLG. Residues 229 to 239 are Cytoplasmic-facing; sequence YNCIPHLKNTR. The chain crosses the membrane as a helical span at residues 240–260; sequence IILIALPIIFLLFLVVTIIGW. Residues 261 to 275 lie on the Lumenal side of the membrane; that stretch reads NATISFVNFYKYRVY.

The protein belongs to the unc-50 family.

Its subcellular location is the golgi apparatus membrane. Functionally, required for cell surface expression of acetylcholine receptors. The sequence is that of Protein unc-50 homolog from Drosophila melanogaster (Fruit fly).